Consider the following 327-residue polypeptide: MPADQRPLAIALMGPTASGKTALALEAAERWNGEIVSVDSALVYRGLEIGAAKPDAAMRAAVPHHLLDLRDPWQVYSAAEFAGDARQAIAQIVARGKLPILAGGTGLYFRALLEGLSHLPEADRAARASIAAEAAQIGWAGLHSELARVDPVAAARIHATDPQRIQRALEVYRISGRPISYWQALPPGLRLPVRVLKVVLAPRERAVLHGRIERRLDAMLAQGFLAEVEQVRALPQMRAVAVPLDLPAVRAVGYRQAWEYLDGAGSLAEFRDKAIQATRQLAKRQLTWLRGELDARWFDPERDRHQLERALVGFLGDRSAVRQASGV.

14-21 (GPTASGKT) is an ATP binding site. 16–21 (TASGKT) contacts substrate. 2 interaction with substrate tRNA regions span residues 39–42 (DSAL) and 163–167 (QRIQR).

This sequence belongs to the IPP transferase family. In terms of assembly, monomer. The cofactor is Mg(2+).

The catalysed reaction is adenosine(37) in tRNA + dimethylallyl diphosphate = N(6)-dimethylallyladenosine(37) in tRNA + diphosphate. Its function is as follows. Catalyzes the transfer of a dimethylallyl group onto the adenine at position 37 in tRNAs that read codons beginning with uridine, leading to the formation of N6-(dimethylallyl)adenosine (i(6)A). In Xanthomonas oryzae pv. oryzae (strain KACC10331 / KXO85), this protein is tRNA dimethylallyltransferase.